We begin with the raw amino-acid sequence, 135 residues long: Small ribosomal subunit protein uS12 (135 aa).

Positions 1 to 29 (MPTINQLVRKGREKVEKKSKAPALQGNPQ) are disordered. Residue aspartate 89 is modified to 3-methylthioaspartic acid. A disordered region spans residues 106 to 135 (GVKDRKQSRSKYGAKRPKPGQAAATTGKKK). Residues 113-123 (SRSKYGAKRPK) are compositionally biased toward basic residues.

The protein belongs to the universal ribosomal protein uS12 family. As to quaternary structure, part of the 30S ribosomal subunit. Contacts proteins S8 and S17. May interact with IF1 in the 30S initiation complex.

In terms of biological role, with S4 and S5 plays an important role in translational accuracy. Interacts with and stabilizes bases of the 16S rRNA that are involved in tRNA selection in the A site and with the mRNA backbone. Located at the interface of the 30S and 50S subunits, it traverses the body of the 30S subunit contacting proteins on the other side and probably holding the rRNA structure together. The combined cluster of proteins S8, S12 and S17 appears to hold together the shoulder and platform of the 30S subunit. The chain is Small ribosomal subunit protein uS12 from Sulfurihydrogenibium sp. (strain YO3AOP1).